The primary structure comprises 438 residues: Glutamyl-tRNA reductase (438 aa).

Residues 49–52, serine 109, 114–116, and glutamine 120 contribute to the substrate site; these read TCNR and EGQ. Catalysis depends on cysteine 50, which acts as the Nucleophile. 197–202 serves as a coordination point for NADP(+); it reads GAGKMS.

The protein belongs to the glutamyl-tRNA reductase family. In terms of assembly, homodimer.

It carries out the reaction (S)-4-amino-5-oxopentanoate + tRNA(Glu) + NADP(+) = L-glutamyl-tRNA(Glu) + NADPH + H(+). The protein operates within porphyrin-containing compound metabolism; protoporphyrin-IX biosynthesis; 5-aminolevulinate from L-glutamyl-tRNA(Glu): step 1/2. It participates in porphyrin-containing compound metabolism; chlorophyll biosynthesis. Functionally, catalyzes the NADPH-dependent reduction of glutamyl-tRNA(Glu) to glutamate 1-semialdehyde (GSA). This is Glutamyl-tRNA reductase from Synechococcus elongatus (strain ATCC 33912 / PCC 7942 / FACHB-805) (Anacystis nidulans R2).